Here is a 177-residue protein sequence, read N- to C-terminus: Disulfide bond formation protein B (177 aa).

The Cytoplasmic segment spans residues 1 to 14; it reads MLALLKQFSEKRFV. The chain crosses the membrane as a helical span at residues 15-31; the sequence is WFLLAFSSLALESTALY. At 32-49 the chain is on the periplasmic side; it reads FQYGMGLQPCVLCVYERL. A disulfide bridge connects residues Cys41 and Cys44. The helical transmembrane segment at 50-65 threads the bilayer; sequence AMIGLFVAGIIALLQP. At 66 to 72 the chain is on the cytoplasmic side; the sequence is LAFILRL. The helical transmembrane segment at 73–90 threads the bilayer; that stretch reads IALALGLFSSIKGLLISF. The Periplasmic segment spans residues 91–145; sequence RHLDLQMNPAPWKQCEFIPNFPETLPFHQWFPFIFNPTGSCNESQWSLFGLTMVQ. The cysteines at positions 105 and 131 are disulfide-linked. The helical transmembrane segment at 146–164 threads the bilayer; the sequence is WLVVIFSLYVVILTLLLIA. The Cytoplasmic portion of the chain corresponds to 165–177; the sequence is QVIKTRKQRRLFN.

Belongs to the DsbB family.

The protein localises to the cell inner membrane. In terms of biological role, required for disulfide bond formation in some periplasmic proteins. Acts by oxidizing the DsbA protein. The polypeptide is Disulfide bond formation protein B (Haemophilus influenzae (strain 86-028NP)).